Reading from the N-terminus, the 379-residue chain is Putative acetyl-CoA C-acetyltransferase VraB (379 aa).

The active-site Acyl-thioester intermediate is C86. H338 acts as the Proton acceptor in catalysis.

It belongs to the thiolase-like superfamily. Thiolase family.

In Staphylococcus aureus (strain MSSA476), this protein is Putative acetyl-CoA C-acetyltransferase VraB (vraB).